The chain runs to 102 residues: Large ribosomal subunit protein bL21 (102 aa).

This sequence belongs to the bacterial ribosomal protein bL21 family. Part of the 50S ribosomal subunit. Contacts protein L20.

In terms of biological role, this protein binds to 23S rRNA in the presence of protein L20. This is Large ribosomal subunit protein bL21 from Citrifermentans bemidjiense (strain ATCC BAA-1014 / DSM 16622 / JCM 12645 / Bem) (Geobacter bemidjiensis).